A 484-amino-acid chain; its full sequence is MVSTLEKTNVGSITQIIGPVVDVKFPSGNLPEIYNALTITAKNEAGQDVSVTCEVQQLLGDNQVRAVAMSATDGLVRGMEVVDTRAAISVPVGNATLGRIFNVVGEPVDELGPVGTEDKSPIHREAPKLVDLETQPSVFETGIKVVDLLAPYRRGGKIGLFGGAGVGKTVIIMELINNIAKAHGGVSVFGGVGERTREGNDLYNEMIESKVINPENLSESKVALVYGQMNEPPGARMRVGLSALTMAEYFRDVSKQDVLLFIDNIFRFVQAGSEVSALLGRMPSAVGYQPTLGTEMGELQERITSTKEGSITSIQAVYVPADDLTDPAPATTFAHLDATTVLSRGLASKGIYPAVDPLDSTSTMLQPSVVGKEHYDVARAVQSTLQRYKELQDIIAILGLDELSEDDRLVVARARKIERFLSQPFFVAEVFTGSPGQYVKLEDTMKGFKMILSGELDDLPEQAFYMVGGIDQVIAKAEKLKAEA.

ATP is bound at residue 162–169 (GGAGVGKT).

The protein belongs to the ATPase alpha/beta chains family. As to quaternary structure, F-type ATPases have 2 components, CF(1) - the catalytic core - and CF(0) - the membrane proton channel. CF(1) has five subunits: alpha(3), beta(3), gamma(1), delta(1), epsilon(1). CF(0) has four main subunits: a(1), b(1), b'(1) and c(9-12).

It is found in the cellular thylakoid membrane. It catalyses the reaction ATP + H2O + 4 H(+)(in) = ADP + phosphate + 5 H(+)(out). Produces ATP from ADP in the presence of a proton gradient across the membrane. The catalytic sites are hosted primarily by the beta subunits. The protein is ATP synthase subunit beta of Trichodesmium erythraeum (strain IMS101).